Consider the following 177-residue polypeptide: Transmembrane protein 190 (177 aa).

The N-terminal stretch at 1–21 (MLGCGIPALGLLLLLQGSADG) is a signal peptide. The Extracellular portion of the chain corresponds to 22 to 81 (NGIQGFFYPWSCEGDIWDRESCGGQAAIDSPNLCLRLRCCYRNGVCYHQRPDENVRRKHM). Positions 31-71 (WSCEGDIWDRESCGGQAAIDSPNLCLRLRCCYRNGVCYHQR) constitute a P-type domain. 3 disulfide bridges follow: Cys-33–Cys-61, Cys-43–Cys-60, and Cys-55–Cys-67. A helical membrane pass occupies residues 82–102 (WALVWTCSGLLLLSCSICLFW). Residues 103–177 (WAKRRDVLHM…EETEGEEEED (75 aa)) lie on the Cytoplasmic side of the membrane. The segment at 131–177 (KHRGTKKTPSTGSVPVALSKESRDVEGGTEGEGTEEGEETEGEEEED) is disordered. Over residues 157–177 (GGTEGEGTEEGEETEGEEEED) the composition is skewed to acidic residues.

The protein localises to the membrane. In Homo sapiens (Human), this protein is Transmembrane protein 190 (TMEM190).